A 173-amino-acid polypeptide reads, in one-letter code: Cytidylate kinase (173 aa).

An ATP-binding site is contributed by 7–15 (GLAGTGTST).

This sequence belongs to the cytidylate kinase family. Type 2 subfamily.

The protein resides in the cytoplasm. It carries out the reaction CMP + ATP = CDP + ADP. It catalyses the reaction dCMP + ATP = dCDP + ADP. The sequence is that of Cytidylate kinase from Methanosphaera stadtmanae (strain ATCC 43021 / DSM 3091 / JCM 11832 / MCB-3).